Reading from the N-terminus, the 78-residue chain is Large ribosomal subunit protein bL28 (78 aa).

Residues 1 to 28 (MSAICQVTGRQPGYGKSVSHSHRRTSRR) are disordered.

This sequence belongs to the bacterial ribosomal protein bL28 family.

This Corynebacterium diphtheriae (strain ATCC 700971 / NCTC 13129 / Biotype gravis) protein is Large ribosomal subunit protein bL28.